The following is a 2073-amino-acid chain: Dedicator of cytokinesis protein 11 (2073 aa).

Ser12 is subject to Phosphoserine. Phosphothreonine is present on Thr16. Phosphoserine is present on residues Ser23 and Ser161. One can recognise a PH domain in the interval 165-272; it reads GVIKQGWLHK…WLIMLKKIIQ (108 aa). Position 248 is a phosphotyrosine (Tyr248). Phosphoserine occurs at positions 306 and 445. Residues 640 to 818 enclose the C2 DOCK-type domain; the sequence is KNHLYVYPLQ…PLLKIKTHLE (179 aa). Positions 1227–1267 are disordered; sequence QNGHGIKREDSRGSLIPEGATGFPDPGSTSENTRQSSSRSS. Phosphoserine occurs at positions 1237 and 1240. Residues 1254–1267 show a composition bias toward low complexity; it reads STSENTRQSSSRSS. Residues 1609–2036 form the DOCKER domain; that stretch reads KSYASTPELR…LSDIIHEQIL (428 aa).

It belongs to the DOCK family. Interacts with CDC42. As to expression, expressed in spleen, thymus, mesenteric lymph nodes (MLN), bone marrow and peripheral blood lymphocytes. Enriched in B-cells from germinal centers. Expressed in B-, T- and dendritic cells as well as Purkinje cells.

In terms of biological role, guanine nucleotide-exchange factor (GEF) that activates CDC42 by exchanging bound GDP for free GTP. Required for marginal zone (MZ) B-cell development, is associated with early bone marrow B-cell development, MZ B-cell formation, MZ B-cell number and marginal metallophilic macrophages morphology. Facilitates filopodia formation through the activation of CDC42. This chain is Dedicator of cytokinesis protein 11, found in Mus musculus (Mouse).